A 135-amino-acid polypeptide reads, in one-letter code: Fluoride-specific ion channel FluC (135 aa).

4 consecutive transmembrane segments (helical) span residues 12–32 (FLVI…LGLS), 42–62 (LGTL…VGIF), 70–90 (LAWK…FSTF), and 106–126 (AIGL…LGLL). Na(+)-binding residues include Gly-82 and Thr-85.

This sequence belongs to the fluoride channel Fluc/FEX (TC 1.A.43) family.

Its subcellular location is the cell inner membrane. It catalyses the reaction fluoride(in) = fluoride(out). With respect to regulation, na(+) is not transported, but it plays an essential structural role and its presence is essential for fluoride channel function. Functionally, fluoride-specific ion channel. Important for reducing fluoride concentration in the cell, thus reducing its toxicity. In Dechloromonas aromatica (strain RCB), this protein is Fluoride-specific ion channel FluC.